The following is an 87-amino-acid chain: Apoptosis inducing factor BLCAP B (87 aa).

The next 2 helical transmembrane spans lie at 19 to 39 (PALWFSHSVFMGFYLLSFLLE) and 43 to 63 (CTICALVFLGALFLICYSCWG).

The protein belongs to the BLCAP family.

The protein resides in the cytoplasm. It localises to the nucleus. Its subcellular location is the membrane. Functionally, acts as a tumor suppressor; induces growth arrest at G(1)/S checkpoint and apoptosis via RB1-dependent and p53/TP53- and NF-kappa-B-independent mechanisms. Modulates expression of genes involved in the regulation of proliferation, cell cycle and apoptosis. The sequence is that of Apoptosis inducing factor BLCAP B (blcap-b) from Xenopus laevis (African clawed frog).